Reading from the N-terminus, the 525-residue chain is GMP synthase [glutamine-hydrolyzing] (525 aa).

The 199-residue stretch at 9–207 (RILILDFGSQ…VRDICQCEAL (199 aa)) folds into the Glutamine amidotransferase type-1 domain. Cys86 acts as the Nucleophile in catalysis. Residues His181 and Glu183 contribute to the active site. The 193-residue stretch at 208-400 (WTPAKIIDDA…LGLPYDMLYR (193 aa)) folds into the GMPS ATP-PPase domain. 235-241 (SGGVDSS) lines the ATP pocket.

Homodimer.

It catalyses the reaction XMP + L-glutamine + ATP + H2O = GMP + L-glutamate + AMP + diphosphate + 2 H(+). Its pathway is purine metabolism; GMP biosynthesis; GMP from XMP (L-Gln route): step 1/1. Functionally, catalyzes the synthesis of GMP from XMP. In Salmonella typhimurium (strain LT2 / SGSC1412 / ATCC 700720), this protein is GMP synthase [glutamine-hydrolyzing].